A 609-amino-acid chain; its full sequence is N-acetyltransferase ESCO2 (609 aa).

4 disordered regions span residues 1–71 (MLSR…RVSP), 100–165 (EAKS…TDQV), 197–241 (KKPT…SPVR), and 314–357 (PDHD…LTAT). 2 stretches are compositionally biased toward polar residues: residues 13 to 22 (AESNPSKKQI) and 41 to 54 (ISLN…STPK). Basic residues predominate over residues 126–135 (PAKKVQKKPR). The segment covering 214-230 (PTYEKPSIRKPVREKEL) has biased composition (basic and acidic residues). Residues 345–355 (PLNSSTPSALT) show a composition bias toward polar residues. Residues 392-416 (TTCASCGMLYSTDSPEDNFQHTQFH) form a CCHH-type zinc finger.

Belongs to the acetyltransferase family. ECO subfamily.

It is found in the nucleus. It localises to the chromosome. The catalysed reaction is L-lysyl-[protein] + acetyl-CoA = N(6)-acetyl-L-lysyl-[protein] + CoA + H(+). Acetyltransferase required for the establishment of sister chromatid cohesion. Couples the processes of cohesion and DNA replication to ensure that only sister chromatids become paired together. Essential for early development. In Danio rerio (Zebrafish), this protein is N-acetyltransferase ESCO2 (esco2).